Consider the following 574-residue polypeptide: K(+)/H(+) antiporter NhaP2 (574 aa).

13 consecutive transmembrane segments (helical) span residues 6–26, 34–54, 58–78, 87–107, 109–129, 173–193, 196–216, 219–239, 242–262, 271–291, 299–319, 335–355, and 359–379; these read INSF…LSPV, ILLI…GGIL, YSTA…DGGM, VALW…TSIT, VMAA…GAIV, IAIL…ISFI, FGLG…LVNL, LAEG…YAAS, LGGS…NKPT, VLDG…GLLL, IWLP…PLAV, WFIS…VFPM, and LPGA…SLLV. Positions 405–486 constitute an RCK C-terminal domain; sequence SGVEIYPSSE…LEALSNLFSQ (82 aa).

The protein belongs to the monovalent cation:proton antiporter 1 (CPA1) transporter (TC 2.A.36) family. NhaP2 subfamily.

The protein localises to the cell inner membrane. The enzyme catalyses K(+)(in) + H(+)(out) = K(+)(out) + H(+)(in). Its function is as follows. K(+)/H(+) antiporter that extrudes potassium in exchange for external protons and maintains the internal concentration of potassium under toxic levels. The protein is K(+)/H(+) antiporter NhaP2 of Shewanella sp. (strain MR-7).